Here is a 303-residue protein sequence, read N- to C-terminus: Coenzyme PQQ synthesis protein B (303 aa).

The protein belongs to the PqqB family.

Its pathway is cofactor biosynthesis; pyrroloquinoline quinone biosynthesis. Functionally, may be involved in the transport of PQQ or its precursor to the periplasm. This is Coenzyme PQQ synthesis protein B from Pseudomonas savastanoi pv. phaseolicola (strain 1448A / Race 6) (Pseudomonas syringae pv. phaseolicola (strain 1448A / Race 6)).